We begin with the raw amino-acid sequence, 101 residues long: Small ribosomal subunit protein bS18c (101 aa).

It belongs to the bacterial ribosomal protein bS18 family. In terms of assembly, part of the 30S ribosomal subunit.

The protein resides in the plastid. It localises to the chloroplast. This is Small ribosomal subunit protein bS18c from Aethionema cordifolium (Lebanon stonecress).